Reading from the N-terminus, the 958-residue chain is Glycine dehydrogenase (decarboxylating) (958 aa).

Residue K703 is modified to N6-(pyridoxal phosphate)lysine.

This sequence belongs to the GcvP family. The glycine cleavage system is composed of four proteins: P, T, L and H. Requires pyridoxal 5'-phosphate as cofactor.

The catalysed reaction is N(6)-[(R)-lipoyl]-L-lysyl-[glycine-cleavage complex H protein] + glycine + H(+) = N(6)-[(R)-S(8)-aminomethyldihydrolipoyl]-L-lysyl-[glycine-cleavage complex H protein] + CO2. In terms of biological role, the glycine cleavage system catalyzes the degradation of glycine. The P protein binds the alpha-amino group of glycine through its pyridoxal phosphate cofactor; CO(2) is released and the remaining methylamine moiety is then transferred to the lipoamide cofactor of the H protein. This chain is Glycine dehydrogenase (decarboxylating), found in Nitrobacter hamburgensis (strain DSM 10229 / NCIMB 13809 / X14).